The sequence spans 808 residues: Probable potassium transporter 3 (808 aa).

The Cytoplasmic portion of the chain corresponds to 1-34; the sequence is MPVADCESGLSPADVTGAGAANGNPGHWRSYYRH. A helical transmembrane segment spans residues 35–55; that stretch reads VLLLAYQSCGVVYGDLSTSPL. Over 56–81 the chain is Extracellular; the sequence is YVYKSTFIIGSLRRFQDEEIVFGVFS. A helical transmembrane segment spans residues 82–102; sequence LVFWTLTLIPLLKYVFIVLAA. The Cytoplasmic segment spans residues 103 to 167; it reads DDNGEGGTFA…FLENHRKSRT (65 aa). Residues 168–188 form a helical membrane-spanning segment; that stretch reads FLLVTVLFGASLVIGDGVLTP. Residues 189 to 204 are Extracellular-facing; sequence PMSVLSSFSGLQVHST. A helical transmembrane segment spans residues 205 to 225; it reads ALTSGEVEILSCTVLVCLFMV. Residues 226 to 232 lie on the Cytoplasmic side of the membrane; the sequence is QHWGTHR. Residues 233 to 253 form a helical membrane-spanning segment; that stretch reads VAFLFAPVVIVWLLLLGALGV. The Extracellular segment spans residues 254-283; sequence YNIVVWNPRVLRALSPYYLVRFFQHTGKDG. The helical transmembrane segment at 284 to 304 threads the bilayer; the sequence is WISLGGILLSMTGTEAMYADL. Residues 305–313 lie on the Cytoplasmic side of the membrane; it reads GHFTAASIR. A helical membrane pass occupies residues 314 to 334; it reads VAFVGLIYPCLVLQYMGQAAF. Residues 335–354 lie on the Extracellular side of the membrane; sequence LSKSPHCDIHFVFFESIPTG. A helical transmembrane segment spans residues 355–375; that stretch reads IFWPVLVIATLAAIVGSQAVI. The Cytoplasmic segment spans residues 376–406; that stretch reads SATFSIVRQCTALGCFPRVKIVHTSRRIHGQ. A helical transmembrane segment spans residues 407–427; it reads IYSPEINWILMLLCIAVTMGL. The Extracellular portion of the chain corresponds to 428 to 439; it reads RDTTLIGNAYGM. Residues 440–460 form a helical membrane-spanning segment; sequence ACAGVMLVTTLLMALVIVFVW. The Cytoplasmic portion of the chain corresponds to 461–464; that stretch reads QYSC. A helical membrane pass occupies residues 465–485; sequence LVAALFLVAFGVVEAVYLSAA. The Extracellular segment spans residues 486 to 491; the sequence is LMKVPQ. A helical transmembrane segment spans residues 492–512; it reads GGWLPLVLSLVFVAVMYVWHY. At 513-808 the chain is on the cytoplasmic side; sequence GTRRKHQFDV…LIEVGMIYYV (296 aa).

It belongs to the HAK/KUP transporter (TC 2.A.72.3) family.

Its subcellular location is the membrane. High-affinity potassium transporter. The polypeptide is Probable potassium transporter 3 (HAK3) (Oryza sativa subsp. japonica (Rice)).